Reading from the N-terminus, the 227-residue chain is Cytochrome c oxidase subunit 2 (227 aa).

The Mitochondrial intermembrane portion of the chain corresponds to 1 to 14 (MAYPVQLGFQDAAS). The chain crosses the membrane as a helical span at residues 15-45 (PIMEELLYFHDHTLMIVFLISSLVLYIISLM). Residues 46-59 (LTTKLMHTSTMDAQ) lie on the Mitochondrial matrix side of the membrane. A helical membrane pass occupies residues 60 to 87 (EVETVWTILPAIILILIALPSLRILYMM). The Mitochondrial intermembrane portion of the chain corresponds to 88–227 (DEITTPSLTL…HFEEWLLSMF (140 aa)). 6 residues coordinate Cu cation: His161, Cys196, Glu198, Cys200, His204, and Met207. A Mg(2+)-binding site is contributed by Glu198.

The protein belongs to the cytochrome c oxidase subunit 2 family. In terms of assembly, component of the cytochrome c oxidase (complex IV, CIV), a multisubunit enzyme composed of 14 subunits. The complex is composed of a catalytic core of 3 subunits MT-CO1, MT-CO2 and MT-CO3, encoded in the mitochondrial DNA, and 11 supernumerary subunits COX4I, COX5A, COX5B, COX6A, COX6B, COX6C, COX7A, COX7B, COX7C, COX8 and NDUFA4, which are encoded in the nuclear genome. The complex exists as a monomer or a dimer and forms supercomplexes (SCs) in the inner mitochondrial membrane with NADH-ubiquinone oxidoreductase (complex I, CI) and ubiquinol-cytochrome c oxidoreductase (cytochrome b-c1 complex, complex III, CIII), resulting in different assemblies (supercomplex SCI(1)III(2)IV(1) and megacomplex MCI(2)III(2)IV(2)). Found in a complex with TMEM177, COA6, COX18, COX20, SCO1 and SCO2. Interacts with TMEM177 in a COX20-dependent manner. Interacts with COX20. Interacts with COX16. It depends on Cu cation as a cofactor.

It localises to the mitochondrion inner membrane. The enzyme catalyses 4 Fe(II)-[cytochrome c] + O2 + 8 H(+)(in) = 4 Fe(III)-[cytochrome c] + 2 H2O + 4 H(+)(out). In terms of biological role, component of the cytochrome c oxidase, the last enzyme in the mitochondrial electron transport chain which drives oxidative phosphorylation. The respiratory chain contains 3 multisubunit complexes succinate dehydrogenase (complex II, CII), ubiquinol-cytochrome c oxidoreductase (cytochrome b-c1 complex, complex III, CIII) and cytochrome c oxidase (complex IV, CIV), that cooperate to transfer electrons derived from NADH and succinate to molecular oxygen, creating an electrochemical gradient over the inner membrane that drives transmembrane transport and the ATP synthase. Cytochrome c oxidase is the component of the respiratory chain that catalyzes the reduction of oxygen to water. Electrons originating from reduced cytochrome c in the intermembrane space (IMS) are transferred via the dinuclear copper A center (CU(A)) of subunit 2 and heme A of subunit 1 to the active site in subunit 1, a binuclear center (BNC) formed by heme A3 and copper B (CU(B)). The BNC reduces molecular oxygen to 2 water molecules using 4 electrons from cytochrome c in the IMS and 4 protons from the mitochondrial matrix. The sequence is that of Cytochrome c oxidase subunit 2 (MT-CO2) from Propithecus tattersalli (Golden-crowned Sifaka).